The following is a 53-amino-acid chain: Large ribosomal subunit protein bL32c (53 aa).

This sequence belongs to the bacterial ribosomal protein bL32 family.

The protein localises to the plastid. It localises to the chloroplast. In Phaseolus vulgaris (Kidney bean), this protein is Large ribosomal subunit protein bL32c.